The primary structure comprises 503 residues: Probable cytosol aminopeptidase (503 aa).

Mn(2+) contacts are provided by K274 and D279. K286 is a catalytic residue. 3 residues coordinate Mn(2+): D297, D356, and E358. R360 is a catalytic residue.

Belongs to the peptidase M17 family. The cofactor is Mn(2+).

It localises to the cytoplasm. The catalysed reaction is Release of an N-terminal amino acid, Xaa-|-Yaa-, in which Xaa is preferably Leu, but may be other amino acids including Pro although not Arg or Lys, and Yaa may be Pro. Amino acid amides and methyl esters are also readily hydrolyzed, but rates on arylamides are exceedingly low.. The enzyme catalyses Release of an N-terminal amino acid, preferentially leucine, but not glutamic or aspartic acids.. Presumably involved in the processing and regular turnover of intracellular proteins. Catalyzes the removal of unsubstituted N-terminal amino acids from various peptides. The sequence is that of Probable cytosol aminopeptidase from Burkholderia ambifaria (strain ATCC BAA-244 / DSM 16087 / CCUG 44356 / LMG 19182 / AMMD) (Burkholderia cepacia (strain AMMD)).